The primary structure comprises 247 residues: Capsid protein (247 aa).

Positions 3 to 20 (KRDAPWRLMAGTSKVSRS) match the Bipartite nuclear localization signal motif. Positions 31–45 (KRDAWVNRPMYRKPR) match the Nuclear localization signal motif. Positions 92-113 (ITHRVGKRFCVKSVYILGKIWM) match the Nuclear export signal motif. The Bipartite nuclear localization signal motif lies at 191-238 (RRFWKVNNNVVYNHQEAGKYENHTENALLLYMACTHASNPVYATLKIR).

Belongs to the geminiviridae capsid protein family. Homomultimer. Binds to single-stranded and double-stranded viral DNA. Interacts (via nuclear localization signals) with host importin alpha-1a.

It localises to the virion. The protein resides in the host nucleus. Functionally, encapsidates the viral DNA into characteristic twinned ('geminate') particles. Binds the genomic viral ssDNA and shuttles it into and out of the cell nucleus. The CP of bipartite geminiviruses is not required for cell-to-cell or systemic movement. The chain is Capsid protein from Solanum lycopersicum (Tomato).